The sequence spans 341 residues: HTH-type transcriptional repressor PurR (341 aa).

Positions 2-56 (ATIKDVAKRANVSTTTVSHVINKTRFVAEETRNAVWAAIKELHYSPSAVARSLKV) constitute an HTH lacI-type domain. Residues 4–23 (IKDVAKRANVSTTTVSHVIN) constitute a DNA-binding region (H-T-H motif). A DNA-binding region spans residues 48-56 (SAVARSLKV). Hypoxanthine is bound by residues Y73, R190, T192, F221, and D275.

Homodimer.

It participates in purine metabolism; purine nucleotide biosynthesis [regulation]. Functionally, is the main repressor of the genes involved in the de novo synthesis of purine nucleotides, regulating purB, purC, purEK, purF, purHD, purL, purMN and guaBA expression. PurR is allosterically activated to bind its cognate DNA by binding the purine corepressors, hypoxanthine or guanine, thereby effecting transcription repression. This is HTH-type transcriptional repressor PurR from Shigella sonnei (strain Ss046).